Reading from the N-terminus, the 103-residue chain is Large ribosomal subunit protein bL21 (103 aa).

The protein belongs to the bacterial ribosomal protein bL21 family. Part of the 50S ribosomal subunit. Contacts protein L20.

Functionally, this protein binds to 23S rRNA in the presence of protein L20. This chain is Large ribosomal subunit protein bL21, found in Aeromonas hydrophila subsp. hydrophila (strain ATCC 7966 / DSM 30187 / BCRC 13018 / CCUG 14551 / JCM 1027 / KCTC 2358 / NCIMB 9240 / NCTC 8049).